The following is a 30-amino-acid chain: Cyclotide mech-1 (30 aa).

The segment at residues 1-30 (GVIPCGESCVFIPCINKKKCSCKNKVCYRD) is a cross-link (cyclopeptide (Gly-Asp)). 3 cysteine pairs are disulfide-bonded: Cys5-Cys20, Cys9-Cys22, and Cys14-Cys27.

Post-translationally, this is a cyclic peptide. Contains 3 disulfide bonds.

Probably participates in a plant defense mechanism (Potential). Binds to and induces leakage in phospholipd membranes, particularly ones containing 1-palmitoyl-2-oleophosphatidylethanolamine (POPE). Not active against Gram-negative bacterium E.coli ATCC 25922 or Gram-positive bacterium S.aureus ATCC 25923 up to a concentration of 64 uM. This Melicytus chathamicus (Chatham Island mahoe) protein is Cyclotide mech-1.